A 221-amino-acid polypeptide reads, in one-letter code: Lipoprotein-releasing system ATP-binding protein LolD (221 aa).

Residues 6-220 form the ABC transporter domain; that stretch reads LILKNISKHY…YKLKHRLLNI (215 aa). 42 to 49 serves as a coordination point for ATP; the sequence is GSSGSGKS.

It belongs to the ABC transporter superfamily. Lipoprotein translocase (TC 3.A.1.125) family. The complex is composed of two ATP-binding proteins (LolD) and two transmembrane proteins (LolC and LolE).

It is found in the cell inner membrane. Its function is as follows. Part of the ABC transporter complex LolCDE involved in the translocation of mature outer membrane-directed lipoproteins, from the inner membrane to the periplasmic chaperone, LolA. Responsible for the formation of the LolA-lipoprotein complex in an ATP-dependent manner. The protein is Lipoprotein-releasing system ATP-binding protein LolD of Rickettsia conorii (strain ATCC VR-613 / Malish 7).